The following is a 187-amino-acid chain: Elongation factor P (187 aa).

This sequence belongs to the elongation factor P family.

It is found in the cytoplasm. It participates in protein biosynthesis; polypeptide chain elongation. Its function is as follows. Involved in peptide bond synthesis. Stimulates efficient translation and peptide-bond synthesis on native or reconstituted 70S ribosomes in vitro. Probably functions indirectly by altering the affinity of the ribosome for aminoacyl-tRNA, thus increasing their reactivity as acceptors for peptidyl transferase. This chain is Elongation factor P, found in Clavibacter michiganensis subsp. michiganensis (strain NCPPB 382).